Here is a 243-residue protein sequence, read N- to C-terminus: Geranylgeranylglyceryl phosphate synthase (243 aa).

Residues Asp-22 and Ser-51 each coordinate Mg(2+). Sn-glycerol 1-phosphate-binding positions include 170–176, 201–202, and 223–224; these read YLESGSG, GG, and GT.

The protein belongs to the GGGP/HepGP synthase family. Group II subfamily. Mg(2+) serves as cofactor.

It localises to the cytoplasm. The enzyme catalyses sn-glycerol 1-phosphate + (2E,6E,10E)-geranylgeranyl diphosphate = sn-3-O-(geranylgeranyl)glycerol 1-phosphate + diphosphate. Its pathway is membrane lipid metabolism; glycerophospholipid metabolism. Prenyltransferase that catalyzes the transfer of the geranylgeranyl moiety of geranylgeranyl diphosphate (GGPP) to the C3 hydroxyl of sn-glycerol-1-phosphate (G1P). This reaction is the first ether-bond-formation step in the biosynthesis of archaeal membrane lipids. This is Geranylgeranylglyceryl phosphate synthase from Picrophilus torridus (strain ATCC 700027 / DSM 9790 / JCM 10055 / NBRC 100828 / KAW 2/3).